Reading from the N-terminus, the 509-residue chain is ATP synthase subunit alpha (509 aa).

169–176 (GDRQTGKT) provides a ligand contact to ATP.

It belongs to the ATPase alpha/beta chains family. F-type ATPases have 2 components, CF(1) - the catalytic core - and CF(0) - the membrane proton channel. CF(1) has five subunits: alpha(3), beta(3), gamma(1), delta(1), epsilon(1). CF(0) has four main subunits: a(1), b(1), b'(1) and c(9-12).

It localises to the cell inner membrane. The catalysed reaction is ATP + H2O + 4 H(+)(in) = ADP + phosphate + 5 H(+)(out). Its function is as follows. Produces ATP from ADP in the presence of a proton gradient across the membrane. The alpha chain is a regulatory subunit. This chain is ATP synthase subunit alpha, found in Bradyrhizobium sp. (strain BTAi1 / ATCC BAA-1182).